The sequence spans 101 residues: Small ribosomal subunit protein uS14 (101 aa).

It belongs to the universal ribosomal protein uS14 family. Part of the 30S ribosomal subunit. Contacts proteins S3 and S10.

In terms of biological role, binds 16S rRNA, required for the assembly of 30S particles and may also be responsible for determining the conformation of the 16S rRNA at the A site. This chain is Small ribosomal subunit protein uS14, found in Haemophilus ducreyi (strain 35000HP / ATCC 700724).